The sequence spans 117 residues: Large ribosomal subunit protein bL20 (117 aa).

The protein belongs to the bacterial ribosomal protein bL20 family.

Functionally, binds directly to 23S ribosomal RNA and is necessary for the in vitro assembly process of the 50S ribosomal subunit. It is not involved in the protein synthesizing functions of that subunit. The sequence is that of Large ribosomal subunit protein bL20 from Ruminiclostridium cellulolyticum (strain ATCC 35319 / DSM 5812 / JCM 6584 / H10) (Clostridium cellulolyticum).